The following is a 294-amino-acid chain: Segregation and condensation protein A (294 aa).

It belongs to the ScpA family. As to quaternary structure, component of a cohesin-like complex composed of ScpA, ScpB and the Smc homodimer, in which ScpA and ScpB bind to the head domain of Smc. The presence of the three proteins is required for the association of the complex with DNA.

It is found in the cytoplasm. Its function is as follows. Participates in chromosomal partition during cell division. May act via the formation of a condensin-like complex containing Smc and ScpB that pull DNA away from mid-cell into both cell halves. In Ureaplasma parvum serovar 3 (strain ATCC 700970), this protein is Segregation and condensation protein A.